A 538-amino-acid polypeptide reads, in one-letter code: Importin subunit alpha-4 (538 aa).

The IBB domain occupies 1-58; it reads MSLRPSTRAELRKKIYKTGVDADEARRRREDNLVEIRKNKREDSLLKKRREGMMLQQQ. ARM repeat units lie at residues 112 to 152, 155 to 194, 197 to 237, 239 to 278, 281 to 320, 323 to 363, 366 to 405, and 409 to 448; these read SPPI…NVAS, SDHT…NVAG, PNCR…NFCR, KPPT…YLSD, NDKI…NIVT, DSQT…NITA, KLQI…NATS, and HEQI…NILK.

The protein belongs to the importin alpha family. As to quaternary structure, forms a complex with importin subunit beta-1. Interacts with A.tumefaciens VirD2 and VirE2.

Its subcellular location is the nucleus envelope. Its function is as follows. Binds to conventional NLS motifs and mediates nuclear protein import across the nuclear envelope. Acts as a cellular receptor for the nuclear import of the virD2 protein of Agrobacterium and is essential for Agrobacterium-mediated root transformation. This Arabidopsis thaliana (Mouse-ear cress) protein is Importin subunit alpha-4.